Here is a 146-residue protein sequence, read N- to C-terminus: ATP synthase F(0) complex subunit C2, mitochondrial (146 aa).

A mitochondrion-targeting transit peptide spans 1 to 71 (MYACSKFVST…RSFQTSAISR (71 aa)). Residues 87–107 (VGVAGSGAGIGTVFGSLIIGY) traverse the membrane as a helical segment. Residue Lys114 is modified to N6,N6,N6-trimethyllysine. The helical transmembrane segment at 122–142 (ILGFALSEAMGLFCLMVAFLI) threads the bilayer.

Belongs to the ATPase C chain family. F-type ATPases have 2 components, CF(1) - the catalytic core - and CF(0) - the membrane proton channel. CF(1) has five subunits: alpha(3), beta(3), gamma(1), delta(1), epsilon(1). CF(0) has three main subunits: a, b and c. Interacts with DNAJC30; interaction is direct. In terms of processing, trimethylated by ATPSCKMT at Lys-114. Methylation is required for proper incorporation of the C subunit into the ATP synthase complex and mitochondrial respiration.

It localises to the mitochondrion membrane. Its function is as follows. Mitochondrial membrane ATP synthase (F(1)F(0) ATP synthase or Complex V) produces ATP from ADP in the presence of a proton gradient across the membrane which is generated by electron transport complexes of the respiratory chain. F-type ATPases consist of two structural domains, F(1) - containing the extramembraneous catalytic core and F(0) - containing the membrane proton channel, linked together by a central stalk and a peripheral stalk. During catalysis, ATP synthesis in the catalytic domain of F(1) is coupled via a rotary mechanism of the central stalk subunits to proton translocation. Part of the complex F(0) domain. A homomeric c-ring of probably 10 subunits is part of the complex rotary element. This chain is ATP synthase F(0) complex subunit C2, mitochondrial, found in Mus musculus (Mouse).